A 356-amino-acid polypeptide reads, in one-letter code: Carbohydrate sulfotransferase 10 (356 aa).

Residues 1-6 (MHHQWL) lie on the Cytoplasmic side of the membrane. The chain crosses the membrane as a helical; Signal-anchor for type II membrane protein span at residues 7-27 (LLAACFWVIFMFMVASKFITL). At 28–356 (TFKDPDGYSA…GYQKPDFLLN (329 aa)) the chain is on the lumenal side. An N-linked (GlcNAc...) asparagine glycan is attached at Asn-99. Residues 127–133 (PKVGNTQ) and 189–197 (RDPFERLIS) each bind 3'-phosphoadenylyl sulfate. N-linked (GlcNAc...) asparagine glycans are attached at residues Asn-228 and Asn-316.

The protein belongs to the sulfotransferase 2 family. In myogenic progenitors, it is ubiquitously expressed.

The protein resides in the golgi apparatus membrane. It carries out the reaction 3-O-{beta-D-GlcA-(1-&gt;[3)-alpha-D-Xyl-(1-&gt;3)-beta-D-GlcA-(1-&gt;](n)-4)-beta-D-Xyl-(1-&gt;4)-Rib-ol-P-Rib-ol-P-3-beta-D-GalNAc-(1-&gt;3)-beta-D-GlcNAc-(1-&gt;4)-O-6-P-alpha-D-Man}-L-Thr-[protein] + 3'-phosphoadenylyl sulfate = 3-O-{O-3-S-beta-D-GlcA-(1-&gt;[3)-alpha-D-Xyl-(1-&gt;3)-beta-D-GlcA-(1-&gt;](n)-4)-beta-D-Xyl-(1-&gt;4)-Rib-ol-P-Rib-ol-P-3-beta-D-GalNAc-(1-&gt;3)-beta-D-GlcNAc-(1-&gt;4)-O-6-P-alpha-D-Man}-L-Thr-[protein] + adenosine 3',5'-bisphosphate + H(+). It catalyses the reaction 17beta-estradiol 3-O-(beta-D-glucuronate) + 3'-phosphoadenylyl sulfate = 17beta-estradiol 3-O-(3-sulfo-beta-D-glucuronate) + adenosine 3',5'-bisphosphate + H(+). The enzyme catalyses 17beta-estradiol 3-O-(beta-D-glucuronate) 17-sulfate + 3'-phosphoadenylyl sulfate = 17beta-estradiol 3-O-(3-sulfo-beta-D-glucuronate) 17-sulfate + adenosine 3',5'-bisphosphate + H(+). The catalysed reaction is 17beta-estradiol 17-O-(beta-D-glucuronate) + 3'-phosphoadenylyl sulfate = 17beta-estradiol 17-O-(3-sulfo-beta-D-glucuronate) + adenosine 3',5'-bisphosphate + H(+). It carries out the reaction 16alpha,17beta-estriol 3-O-(beta-D-glucuronate) + 3'-phosphoadenylyl sulfate = 16alpha,17beta-estriol 3-O-(3-sulfo-beta-D-glucuronate) + adenosine 3',5'-bisphosphate + H(+). It catalyses the reaction 16alpha,17beta-estriol 16-O-(beta-D-glucuronate) + 3'-phosphoadenylyl sulfate = 16alpha,17beta-estriol 16-O-(3-sulfo-beta-D-glucuronate) + adenosine 3',5'-bisphosphate + H(+). The enzyme catalyses 16alpha,17beta-estriol 17-O-(beta-D-glucuronate) + 3'-phosphoadenylyl sulfate = 16alpha,17beta-estriol 17-O-(3-sulfo-beta-D-glucuronate) + adenosine 3',5'-bisphosphate + H(+). The catalysed reaction is estrone 3-O-(beta-D-glucuronate) + 3'-phosphoadenylyl sulfate = estrone 3-O-(3-sulfo-beta-D-glucuronate) + adenosine 3',5'-bisphosphate + H(+). It carries out the reaction 3alpha,20alpha-dihydroxy-5beta-pregnane 3-O-(beta-D-glucuronate) + 3'-phosphoadenylyl sulfate = 3alpha,20alpha-dihydroxy-5beta-pregnane 3-O-(3-sulfo-beta-D-glucuronate) + adenosine 3',5'-bisphosphate + H(+). It catalyses the reaction testosterone 17-O-(beta-D-glucuronate) + 3'-phosphoadenylyl sulfate = testosterone 17-O-(3-sulfo-beta-D-glucuronate) + adenosine 3',5'-bisphosphate + H(+). The enzyme catalyses 3beta-androst-5-en-17-one 3-O-(beta-D-glucuronate) + 3'-phosphoadenylyl sulfate = 3beta-androst-5-en-17-one 3-O-(3-sulfo-beta-D-glucuronate) + adenosine 3',5'-bisphosphate + H(+). The catalysed reaction is 3alpha,17alpha-dihydroxy-5beta-androstane-11-one-17beta-carboxylate 3-O-(beta-D-glucuronate) + 3'-phosphoadenylyl sulfate = 3alpha,17alpha-dihydroxy-5beta-androstane-11-one-17beta-carboxylate 3-O-(3-sulfo-beta-D-glucuronate) + adenosine 3',5'-bisphosphate + H(+). It carries out the reaction 3alpha-hydroxyetiocholan-17-one 3-O-(beta-D-glucuronate) + 3'-phosphoadenylyl sulfate = 3alpha-hydroxyetiocholan-17-one 3-O-(3-sulfo-beta-D-glucuronate) + adenosine 3',5'-bisphosphate + H(+). It functions in the pathway steroid metabolism. Its pathway is protein modification; carbohydrate sulfation. Functionally, catalyzes the transfer of sulfate from 3'-phosphoadenylyl sulfate (PAPS) to position 3 of terminal glucuronic acid of both protein- and lipid-linked oligosaccharides. Participates in biosynthesis of HNK-1 carbohydrate structure 3-O-sulfo-beta-D-GlcA-(1-&gt;3)-beta-D-Gal-(1-&gt;4)-D-GlcNAc-R, a sulfated glucuronyl-lactosaminyl residue carried by many neural recognition molecules, which is involved in cell interactions during ontogenetic development and in synaptic plasticity in the adult. May be indirectly involved in synapse plasticity of the hippocampus, via its role in HNK-1 biosynthesis. Sulfates terminal glucuronyl residue of the laminin globular (LG)-domain binding epitope on DAG1/alpha-dystroglycan and prevents further polymerization by LARGE1 glycosyltransferase. Likely defines the chain length of LG epitope, conferring binding specificity to extracellular matrix components. Plays a role in down-regulating the steroid hormones. Sulfates glucuronidated estrogens and androgens with an impact in hormone cycle and fertility. Has a preference for glucuronyl moiety at the 3-hydroxyl group of a sterol ring rather than the 17-hydroxyl group, showing high catalytic efficiency for 17beta-estradiol 3-O-(beta-D-glucuronate) and dehydroepiandrosterone 3-O-(beta-D-glucuronate) hormones. This chain is Carbohydrate sulfotransferase 10 (Chst10), found in Rattus norvegicus (Rat).